We begin with the raw amino-acid sequence, 200 residues long: NADH-quinone oxidoreductase subunit B (200 aa).

Positions 78, 79, 144, and 174 each coordinate [4Fe-4S] cluster.

The protein belongs to the complex I 20 kDa subunit family. As to quaternary structure, NDH-1 is composed of 14 different subunits. Subunits NuoB, C, D, E, F, and G constitute the peripheral sector of the complex. The cofactor is [4Fe-4S] cluster.

The protein localises to the cell membrane. It catalyses the reaction a quinone + NADH + 5 H(+)(in) = a quinol + NAD(+) + 4 H(+)(out). In terms of biological role, NDH-1 shuttles electrons from NADH, via FMN and iron-sulfur (Fe-S) centers, to quinones in the respiratory chain. The immediate electron acceptor for the enzyme in this species is believed to be ubiquinone. Couples the redox reaction to proton translocation (for every two electrons transferred, four hydrogen ions are translocated across the cytoplasmic membrane), and thus conserves the redox energy in a proton gradient. The protein is NADH-quinone oxidoreductase subunit B of Dehalococcoides mccartyi (strain ATCC BAA-2266 / KCTC 15142 / 195) (Dehalococcoides ethenogenes (strain 195)).